Consider the following 188-residue polypeptide: Putative manganese efflux pump MntP (188 aa).

A run of 6 helical transmembrane segments spans residues 3-23, 35-55, 70-90, 104-126, 140-160, and 167-187; these read LYAL…VALA, IAAT…AGWV, WAAF…GLSG, WLTV…GLAF, MATT…GVLF, and AGGL…LGLI.

The protein belongs to the MntP (TC 9.B.29) family.

Its subcellular location is the cell inner membrane. In terms of biological role, probably functions as a manganese efflux pump. In Neisseria meningitidis serogroup C / serotype 2a (strain ATCC 700532 / DSM 15464 / FAM18), this protein is Putative manganese efflux pump MntP.